Reading from the N-terminus, the 391-residue chain is Casein kinase II subunit alpha 3 (391 aa).

The Protein kinase domain occupies 39–324 (YQLVRKLGRG…AREAMEHPYF (286 aa)). ATP is bound by residues 45–53 (LGRGKYSEV) and K68. D156 (proton acceptor) is an active-site residue.

The protein belongs to the protein kinase superfamily. Ser/Thr protein kinase family. CK2 subfamily. Heterotetramer composed of two catalytic subunits (alpha chain and/or alpha' chain) and two regulatory subunits (beta chains). Interacts with PML. Detected in blood platelets and megakaryocyte cell lines. Poorly expressed in lung. Highly expressed in lung tumor tissues.

It carries out the reaction L-seryl-[protein] + ATP = O-phospho-L-seryl-[protein] + ADP + H(+). The catalysed reaction is L-threonyl-[protein] + ATP = O-phospho-L-threonyl-[protein] + ADP + H(+). In terms of biological role, probable catalytic subunit of a constitutively active serine/threonine-protein kinase complex that phosphorylates a large number of substrates containing acidic residues C-terminal to the phosphorylated serine or threonine. Amplification-dependent oncogene; promotes cell proliferation and tumorigenesis by down-regulating expression of the tumor suppressor protein, PML. May play a role in the pathogenesis of the lung cancer development and progression. The polypeptide is Casein kinase II subunit alpha 3 (CSNK2A3) (Homo sapiens (Human)).